The following is a 37-amino-acid chain: Large ribosomal subunit protein bL36 (37 aa).

The protein belongs to the bacterial ribosomal protein bL36 family.

The chain is Large ribosomal subunit protein bL36 from Moorella thermoacetica (strain ATCC 39073 / JCM 9320).